A 1109-amino-acid polypeptide reads, in one-letter code: Carbamoyl phosphate synthase large chain (1109 aa).

The segment at Met1 to Glu402 is carboxyphosphate synthetic domain. The ATP site is built by Arg129, Arg169, Gly175, Gly176, Glu208, Ile210, Glu215, Gly241, Val242, His243, Gln285, and Glu299. The 196-residue stretch at Lys133 to Leu328 folds into the ATP-grasp 1 domain. The Mg(2+) site is built by Gln285, Glu299, and Asn301. 3 residues coordinate Mn(2+): Gln285, Glu299, and Asn301. An oligomerization domain region spans residues Gln403–Asp546. A carbamoyl phosphate synthetic domain region spans residues Glu547 to Asn950. Residues Ser677–Thr868 form the ATP-grasp 2 domain. Arg713, Arg752, Leu754, Glu759, Gly784, Ile785, His786, Ser787, Gln827, and Glu839 together coordinate ATP. Residues Gln827, Glu839, and Asn841 each contribute to the Mg(2+) site. Positions 827, 839, and 841 each coordinate Mn(2+). Residues Asn951–Ser1096 form the MGS-like domain. An allosteric domain region spans residues Asn951–Ala1109.

The protein belongs to the CarB family. Composed of two chains; the small (or glutamine) chain promotes the hydrolysis of glutamine to ammonia, which is used by the large (or ammonia) chain to synthesize carbamoyl phosphate. Tetramer of heterodimers (alpha,beta)4. It depends on Mg(2+) as a cofactor. Mn(2+) is required as a cofactor.

The enzyme catalyses hydrogencarbonate + L-glutamine + 2 ATP + H2O = carbamoyl phosphate + L-glutamate + 2 ADP + phosphate + 2 H(+). It carries out the reaction hydrogencarbonate + NH4(+) + 2 ATP = carbamoyl phosphate + 2 ADP + phosphate + 2 H(+). It functions in the pathway amino-acid biosynthesis; L-arginine biosynthesis; carbamoyl phosphate from bicarbonate: step 1/1. It participates in pyrimidine metabolism; UMP biosynthesis via de novo pathway; (S)-dihydroorotate from bicarbonate: step 1/3. Functionally, large subunit of the glutamine-dependent carbamoyl phosphate synthetase (CPSase). CPSase catalyzes the formation of carbamoyl phosphate from the ammonia moiety of glutamine, carbonate, and phosphate donated by ATP, constituting the first step of 2 biosynthetic pathways, one leading to arginine and/or urea and the other to pyrimidine nucleotides. The large subunit (synthetase) binds the substrates ammonia (free or transferred from glutamine from the small subunit), hydrogencarbonate and ATP and carries out an ATP-coupled ligase reaction, activating hydrogencarbonate by forming carboxy phosphate which reacts with ammonia to form carbamoyl phosphate. The protein is Carbamoyl phosphate synthase large chain of Pseudarthrobacter chlorophenolicus (strain ATCC 700700 / DSM 12829 / CIP 107037 / JCM 12360 / KCTC 9906 / NCIMB 13794 / A6) (Arthrobacter chlorophenolicus).